Consider the following 529-residue polypeptide: Alkaline phosphatase, germ cell type (529 aa).

Positions 1 to 18 (MWGACLLLLGLSLQVCPS) are cleaved as a signal peptide. Aspartate 60 contacts Mg(2+). 2 residues coordinate Zn(2+): aspartate 60 and serine 110. The active-site Phosphoserine intermediate is serine 110. Cysteine 139 and cysteine 201 are disulfide-bonded. Asparagine 140 carries an N-linked (GlcNAc...) asparagine glycan. Serine 173 contacts Mg(2+). Glutamate 234 contacts Ca(2+). Asparagine 267 and asparagine 277 each carry an N-linked (GlcNAc...) asparagine glycan. Residues phenylalanine 287, glutamate 288, and aspartate 303 each contribute to the Ca(2+) site. Residue glutamate 329 participates in Mg(2+) binding. 5 residues coordinate Zn(2+): aspartate 334, histidine 338, aspartate 375, histidine 376, and histidine 450. A disulfide bond links cysteine 485 and cysteine 492. A lipid anchor (GPI-anchor amidated serine) is attached at serine 502. A propeptide spans 503 to 529 (AVSPGYMSTLLCLLAGKMLMLMAAAEP) (removed in mature form).

The protein belongs to the alkaline phosphatase family. In terms of assembly, homodimer. Mg(2+) is required as a cofactor. Zn(2+) serves as cofactor. Requires Ca(2+) as cofactor. As to expression, embryo and testis.

It is found in the cell membrane. The enzyme catalyses a phosphate monoester + H2O = an alcohol + phosphate. With respect to regulation, inhibited by L-leucine, EDTA and heat. Its function is as follows. Alkaline phosphatase that can hydrolyze various phosphate compounds. This Mus musculus (Mouse) protein is Alkaline phosphatase, germ cell type (Alpg).